The following is a 712-amino-acid chain: Semaphorin-1A (712 aa).

The first 20 residues, 1-20 (MVVKILVWSICLIALCHAWM), serve as a signal peptide directing secretion. The Sema domain maps to 21-483 (PDSSSKLINH…GKDEIRLANL (463 aa)). Topologically, residues 21–601 (PDSSSKLINH…IGGCAVRQQL (581 aa)) are extracellular. 2 N-linked (GlcNAc...) asparagine glycosylation sites follow: Asn42 and Asn69. Intrachain disulfides connect Cys95–Cys105 and Cys123–Cys132. N-linked (GlcNAc...) asparagine glycans are attached at residues Asn161 and Asn265. 4 disulfide bridges follow: Cys242–Cys357, Cys266–Cys316, Cys486–Cys503, and Cys495–Cys512. The helical transmembrane segment at 602 to 622 (VIYTAGTLHIVVVVVSIVGLF) threads the bilayer. Residues 623–712 (SWLYSGLSVF…TLQKIKKTYI (90 aa)) are Cytoplasmic-facing.

This sequence belongs to the semaphorin family.

The protein resides in the membrane. Its function is as follows. Plays a role in growth cones guidance. This Tribolium confusum (Confused flour beetle) protein is Semaphorin-1A (SEMA-1A).